Here is a 715-residue protein sequence, read N- to C-terminus: Probable serine/threonine-protein kinase MARK-B (715 aa).

Over residues 24–37 (SCSSNSTTSSSSNS) the composition is skewed to low complexity. Residues 24 to 65 (SCSSNSTTSSSSNSPKQNKVSPGYRNKPQQQQHKKGHKMGNY) are disordered. The Protein kinase domain maps to 65-320 (YLLGKTIGSG…LDEIKTHVWV (256 aa)). Residues 71–79 (IGSGTSSKV) and Lys-94 contribute to the ATP site. Asp-187 acts as the Proton acceptor in catalysis. Positions 335–344 (KVSDRLEKEQ) are enriched in basic and acidic residues. 2 disordered regions span residues 335–399 (KVSD…IPQN) and 446–530 (CSAP…HHST). Low complexity predominate over residues 345 to 368 (QQQTPQHQQTQQQLQPQSQLQQHS). Positions 381 to 399 (IGSNRPLNQSSPNLTIPQN) are enriched in polar residues. Composition is skewed to low complexity over residues 451-478 (SPHS…LSVS) and 487-513 (SSNP…INTS). The span at 517 to 527 (QYHHHHHHQNH) shows a compositional bias: basic residues. Residues 666 to 715 (LCPRNETINFEIEVCKVNGMDMYGIKFKRLSGDAWSYSSSCIKIVESLKL) form the KA1 domain.

The protein belongs to the protein kinase superfamily. CAMK Ser/Thr protein kinase family. SNF1 subfamily.

The enzyme catalyses L-seryl-[protein] + ATP = O-phospho-L-seryl-[protein] + ADP + H(+). It carries out the reaction L-threonyl-[protein] + ATP = O-phospho-L-threonyl-[protein] + ADP + H(+). The polypeptide is Probable serine/threonine-protein kinase MARK-B (mrkB) (Dictyostelium discoideum (Social amoeba)).